We begin with the raw amino-acid sequence, 699 residues long: Elongation factor G (699 aa).

The region spanning 8 to 286 (EKLRNIGIVA…AVIVTYPLPI (279 aa)) is the tr-type G domain. Residues 17 to 24 (AHIDAGKT), 84 to 88 (DTPGH), and 138 to 141 (NKMD) each bind GTP.

It belongs to the TRAFAC class translation factor GTPase superfamily. Classic translation factor GTPase family. EF-G/EF-2 subfamily.

It is found in the cytoplasm. In terms of biological role, catalyzes the GTP-dependent ribosomal translocation step during translation elongation. During this step, the ribosome changes from the pre-translocational (PRE) to the post-translocational (POST) state as the newly formed A-site-bound peptidyl-tRNA and P-site-bound deacylated tRNA move to the P and E sites, respectively. Catalyzes the coordinated movement of the two tRNA molecules, the mRNA and conformational changes in the ribosome. This is Elongation factor G (fusA) from Aquifex pyrophilus.